Reading from the N-terminus, the 200-residue chain is Glutathione peroxidase 1 (200 aa).

Serine 31 is subject to Phosphoserine. Residue selenocysteine 46 is part of the active site. Residue selenocysteine 46 is a non-standard amino acid, selenocysteine. N6-acetyllysine; alternate is present on residues lysine 85 and lysine 111. N6-succinyllysine; alternate is present on residues lysine 85 and lysine 111. Residue lysine 118 is modified to N6-acetyllysine. Lysine 145 bears the N6-acetyllysine; alternate mark. Residue lysine 145 is modified to N6-succinyllysine; alternate. Serine 194 is subject to Phosphoserine.

This sequence belongs to the glutathione peroxidase family. In terms of assembly, homotetramer. Interacts with MIEN1. During periods of oxidative stress, Sec-46 may react with a superoxide radical, irreversibly lose hydroselenide and be converted to dehydroalanine.

The protein localises to the cytoplasm. The protein resides in the mitochondrion. It catalyses the reaction 2 glutathione + H2O2 = glutathione disulfide + 2 H2O. It carries out the reaction a hydroperoxy polyunsaturated fatty acid + 2 glutathione = a hydroxy polyunsaturated fatty acid + glutathione disulfide + H2O. The catalysed reaction is tert-butyl hydroperoxide + 2 glutathione = tert-butanol + glutathione disulfide + H2O. The enzyme catalyses cumene hydroperoxide + 2 glutathione = 2-phenylpropan-2-ol + glutathione disulfide + H2O. It catalyses the reaction (13S)-hydroperoxy-(9Z,11E)-octadecadienoate + 2 glutathione = (13S)-hydroxy-(9Z,11E)-octadecadienoate + glutathione disulfide + H2O. It carries out the reaction (9S)-hydroperoxy-(10E,12Z)-octadecadienoate + 2 glutathione = (9S)-hydroxy-(10E,12Z)-octadecadienoate + glutathione disulfide + H2O. The catalysed reaction is (5S)-hydroperoxy-(6E,8Z,11Z,14Z)-eicosatetraenoate + 2 glutathione = (5S)-hydroxy-(6E,8Z,11Z,14Z)-eicosatetraenoate + glutathione disulfide + H2O. The enzyme catalyses (12S)-hydroperoxy-(5Z,8Z,10E,14Z)-eicosatetraenoate + 2 glutathione = (12S)-hydroxy-(5Z,8Z,10E,14Z)-eicosatetraenoate + glutathione disulfide + H2O. It catalyses the reaction (12R)-hydroperoxy-(5Z,8Z,10E,14Z)-eicosatetraenoate + 2 glutathione = (12R)-hydroxy-(5Z,8Z,10E,14Z)-eicosatetraenoate + glutathione disulfide + H2O. It carries out the reaction (15S)-hydroperoxy-(5Z,8Z,11Z,13E)-eicosatetraenoate + 2 glutathione = (15S)-hydroxy-(5Z,8Z,11Z,13E)-eicosatetraenoate + glutathione disulfide + H2O. The catalysed reaction is (5S)-hydroperoxy-(6E,8Z,11Z,14Z,17Z)-eicosapentaenoate + 2 glutathione = (5S)-hydroxy-(6E,8Z,11Z,14Z,17Z)-eicosapentaenoate + glutathione disulfide + H2O. The enzyme catalyses (12S)-hydroperoxy-(5Z,8Z,10E,14Z,17Z)-eicosapentaenoate + 2 glutathione = (12S)-hydroxy-(5Z,8Z,10E,14Z,17Z)-eicosapentaenoate + glutathione disulfide + H2O. It catalyses the reaction (15S)-hydroperoxy-(5Z,8Z,11Z,13E,17Z)-eicosapentaenoate + 2 glutathione = (15S)-hydroxy-(5Z,8Z,11Z,13E,17Z)-eicosapentaenoate + glutathione disulfide + H2O. It carries out the reaction (15S)-hydroperoxy-(11Z,13E)-eicosadienoate + 2 glutathione = (15S)-hydroxy-(11Z,13E)-eicosadienoate + glutathione disulfide + H2O. The catalysed reaction is (17S)-hydroperoxy-(4Z,7Z,10Z,13Z,15E,19Z)-docosahexaenoate + 2 glutathione = (17S)-hydroxy-(4Z,7Z,10Z,13Z,15E,19Z)-docosahexaenoate + glutathione disulfide + H2O. Catalyzes the reduction of hydroperoxides in a glutathione-dependent manner thus regulating cellular redox homeostasis. Can reduce small soluble hydroperoxides such as H2O2, cumene hydroperoxide and tert-butyl hydroperoxide, as well as several fatty acid-derived hydroperoxides. In platelets catalyzes the reduction of 12-hydroperoxyeicosatetraenoic acid, the primary product of the arachidonate 12-lipoxygenase pathway. This chain is Glutathione peroxidase 1 (GPX1), found in Oryctolagus cuniculus (Rabbit).